Here is a 1156-residue protein sequence, read N- to C-terminus: MFPAAPSPRTPGTGSRRGPLAGLGPGSTPRTASRKGLPLGSAVSSPVLFSPVGRRSSLSSRGTPTRMFPHHSITESVNYDVKTFGSSLPVKVMEALTLAEVDDQLTINIDEGGWACLVCKEKLIIWKIALSPITKLSVCKELQLPPSDFHWSADLVALSYSSPSGEAHSTQAVAVMVATREGSIRYWPSLAGEDTYTEAFVDSGGDKTYSFLTAVQGGSFILSSSGSQLIRLIPESSGKIHQHILPQGQGMLSGIGRKVSSLFGILSPSSDLTLSSVLWDRERSSFYSLTSSNISKWELDDSSEKHAYSWDINRALKENITDAIWGSESNYEAIKEGVNIRYLDLKQNCDGLVILAAAWHSADNPCLIYYSLITIEDNGCQMSDAVTVEVTQYNPPFQSEDLILCQLTVPNFSNQTAYLYNESAVYVCSTGTGKFSLPQEKIVFNAQGDSVLGAGACGGVPIIFSRNSGLVSITSRENVSILAEDLEGSLASSVAGPNSESMIFETTTKNETIAQEDKIKLLKAAFLQYCRKDLGHAQMVVDELFSSHSDLDSDSELDRAVTQISVDLMDDYPASDPRWAESVPEEAPGFSNTSLIILHQLEDKMKAHSFLMDFIHQVGLFGRLGSFPVRGTPMATRLLLCEHAEKLSAAIVLKNHHSRLSDLVNTAILIALNKREYEIPSNLTPADVFFREVSQVDTICECLLEHEEQVLRDAPMDSIEWAEVVINVNNILKDMLQAASHYRQNRNSLYRREESLEKEPEYVPWTATSGPGGIRTVIIRQHEIVLKVAYPQADSNLRNIVTEQLVALIDCFLDGYVSQLKSVDKSSNRERYDNLEMEYLQKRSDLLSPLLSLGQYLWAASLAEKYCDFDILVQMCEQTDNQSRLQRYMTQFADQNFSDFLFRWYLEKGKRGKLLSQPISQHGQLANFLQAHEHLSWLHEINSQELEKAHATLLGLANMETRYFAKKKTLLGLSKLAALASDFSEDMLQEKIEEMAEQERFLLHQETLPEQLLAEKQLNLSAMPVLTAPQLIGLYICEENRRANEYDFKKALDLLEYIDEEEDININDLKLEILCKALQRDNWSSSDGKDDPIEVSKDSIFVKILQKLLKDGIQLSEYLPEVKDLLQADQLGSLKSNPYFEFVLKANYEYYVQGQI.

Position 1 is an N-acetylmethionine (Met1). Positions 1-39 (MFPAAPSPRTPGTGSRRGPLAGLGPGSTPRTASRKGLPL) are disordered. A phosphoserine mark is found at Ser7 and Ser15. Arg17 is subject to Omega-N-methylarginine. Ser27 is modified (phosphoserine). Thr28 is modified (phosphothreonine). Position 30 is an omega-N-methylarginine (Arg30). Ser41, Ser45, Ser50, Ser72, Ser131, Ser480, Ser489, Ser493, Ser501, and Ser755 each carry phosphoserine. N6-acetyllysine is present on Lys787. Phosphoserine is present on Ser1133.

This sequence belongs to the nucleoporin Nup133 family. In terms of assembly, forms part of the Nup160 subcomplex in the nuclear pore which is composed of NUP160, NUP133, NUP107 and Nup96. This complex plays a role in RNA export and in tethering Nup98 and NUP153 to the nucleus. Widely expressed in fetal and adult tissues. Expressed in the brain and kidney.

The protein localises to the nucleus. The protein resides in the nuclear pore complex. Its subcellular location is the chromosome. It localises to the centromere. It is found in the kinetochore. Functionally, involved in poly(A)+ RNA transport. Involved in nephrogenesis. This chain is Nuclear pore complex protein Nup133 (NUP133), found in Homo sapiens (Human).